A 970-amino-acid polypeptide reads, in one-letter code: Disease resistance protein RGA2 (970 aa).

The NB-ARC domain occupies Arg135–Gly438. Gly182–Thr189 is a binding site for ATP. LRR repeat units follow at residues Phe525–Leu548, His550–Leu571, Asn573–Lys594, Leu595–Leu619, Leu638–Lys662, Lys672–Val697, Leu752–Val777, Phe787–Glu811, Phe813–Asn832, Leu833–Asn857, Ala859–Leu882, Ala884–Gly906, Leu907–Leu931, and Ile946–Ile970.

The protein belongs to the disease resistance NB-LRR family.

Disease resistance protein. Resistance proteins guard the plant against pathogens that contain an appropriate avirulence protein via a direct or indirect interaction with this avirulence protein. That triggers a defense system which restricts the pathogen growth. Confers a broad resistance to all known races of P.infestans. The sequence is that of Disease resistance protein RGA2 (RGA2) from Solanum bulbocastanum (Wild potato).